A 223-amino-acid chain; its full sequence is Phosphoribosylformylglycinamidine synthase subunit PurQ (223 aa).

The Glutamine amidotransferase type-1 domain occupies 4-223 (KIGVITFPGT…FLSAVGTIAA (220 aa)). The active-site Nucleophile is C87. Catalysis depends on residues H195 and E197.

Part of the FGAM synthase complex composed of 1 PurL, 1 PurQ and 2 PurS subunits.

Its subcellular location is the cytoplasm. The enzyme catalyses N(2)-formyl-N(1)-(5-phospho-beta-D-ribosyl)glycinamide + L-glutamine + ATP + H2O = 2-formamido-N(1)-(5-O-phospho-beta-D-ribosyl)acetamidine + L-glutamate + ADP + phosphate + H(+). The catalysed reaction is L-glutamine + H2O = L-glutamate + NH4(+). It participates in purine metabolism; IMP biosynthesis via de novo pathway; 5-amino-1-(5-phospho-D-ribosyl)imidazole from N(2)-formyl-N(1)-(5-phospho-D-ribosyl)glycinamide: step 1/2. Functionally, part of the phosphoribosylformylglycinamidine synthase complex involved in the purines biosynthetic pathway. Catalyzes the ATP-dependent conversion of formylglycinamide ribonucleotide (FGAR) and glutamine to yield formylglycinamidine ribonucleotide (FGAM) and glutamate. The FGAM synthase complex is composed of three subunits. PurQ produces an ammonia molecule by converting glutamine to glutamate. PurL transfers the ammonia molecule to FGAR to form FGAM in an ATP-dependent manner. PurS interacts with PurQ and PurL and is thought to assist in the transfer of the ammonia molecule from PurQ to PurL. This chain is Phosphoribosylformylglycinamidine synthase subunit PurQ, found in Corynebacterium glutamicum (strain ATCC 13032 / DSM 20300 / JCM 1318 / BCRC 11384 / CCUG 27702 / LMG 3730 / NBRC 12168 / NCIMB 10025 / NRRL B-2784 / 534).